Here is a 328-residue protein sequence, read N- to C-terminus: Ribosomal RNA small subunit methyltransferase H (328 aa).

S-adenosyl-L-methionine-binding positions include 37–39, aspartate 57, phenylalanine 83, aspartate 104, and glutamine 111; that span reads GGH.

It belongs to the methyltransferase superfamily. RsmH family.

It is found in the cytoplasm. It carries out the reaction cytidine(1402) in 16S rRNA + S-adenosyl-L-methionine = N(4)-methylcytidine(1402) in 16S rRNA + S-adenosyl-L-homocysteine + H(+). Functionally, specifically methylates the N4 position of cytidine in position 1402 (C1402) of 16S rRNA. This chain is Ribosomal RNA small subunit methyltransferase H, found in Neisseria meningitidis serogroup C / serotype 2a (strain ATCC 700532 / DSM 15464 / FAM18).